The sequence spans 345 residues: uncharacterized protein (345 aa).

3 Solcar repeats span residues 80–153, 162–246, and 256–339; these read MSFF…MKSR, SDPQ…LKLK, and NLAH…ILNF. The next 6 helical transmembrane spans lie at 83-103, 128-148, 220-240, 262-282, 296-316, and 319-339; these read FEAL…LFPI, GLGS…TTYE, AGYG…FPIW, AISG…FDVV, VFTI…KGIV, and VLWL…ILNF.

It belongs to the mitochondrial carrier (TC 2.A.29) family.

The protein localises to the mitochondrion inner membrane. This is an uncharacterized protein from Schizosaccharomyces pombe (strain 972 / ATCC 24843) (Fission yeast).